The chain runs to 97 residues: Putative pterin-4-alpha-carbinolamine dehydratase (97 aa).

Belongs to the pterin-4-alpha-carbinolamine dehydratase family.

The enzyme catalyses (4aS,6R)-4a-hydroxy-L-erythro-5,6,7,8-tetrahydrobiopterin = (6R)-L-erythro-6,7-dihydrobiopterin + H2O. The polypeptide is Putative pterin-4-alpha-carbinolamine dehydratase (Rhizorhabdus wittichii (strain DSM 6014 / CCUG 31198 / JCM 15750 / NBRC 105917 / EY 4224 / RW1) (Sphingomonas wittichii)).